The following is a 201-amino-acid chain: uncharacterized protein (201 aa).

As to quaternary structure, interacts with the chaperones HSP82 and HSC82.

This is an uncharacterized protein from Saccharomyces cerevisiae (strain ATCC 204508 / S288c) (Baker's yeast).